The following is a 77-amino-acid chain: Acyl carrier protein (77 aa).

Positions 2–77 constitute a Carrier domain; the sequence is SDVAKRVKEI…DAIDYITEHT (76 aa). S37 is subject to O-(pantetheine 4'-phosphoryl)serine.

It belongs to the acyl carrier protein (ACP) family. Post-translationally, 4'-phosphopantetheine is transferred from CoA to a specific serine of apo-ACP by AcpS. This modification is essential for activity because fatty acids are bound in thioester linkage to the sulfhydryl of the prosthetic group.

The protein localises to the cytoplasm. It functions in the pathway lipid metabolism; fatty acid biosynthesis. In terms of biological role, carrier of the growing fatty acid chain in fatty acid biosynthesis. The polypeptide is Acyl carrier protein (Trichlorobacter lovleyi (strain ATCC BAA-1151 / DSM 17278 / SZ) (Geobacter lovleyi)).